A 150-amino-acid chain; its full sequence is Large ribosomal subunit protein bL9 (150 aa).

It belongs to the bacterial ribosomal protein bL9 family.

Functionally, binds to the 23S rRNA. The chain is Large ribosomal subunit protein bL9 from Variovorax paradoxus (strain S110).